Here is a 249-residue protein sequence, read N- to C-terminus: Putative TrmH family tRNA/rRNA methyltransferase YacO (249 aa).

S-adenosyl-L-methionine-binding residues include G198, L218, and L227.

The protein belongs to the class IV-like SAM-binding methyltransferase superfamily. RNA methyltransferase TrmH family.

The protein is Putative TrmH family tRNA/rRNA methyltransferase YacO (yacO) of Bacillus subtilis (strain 168).